Reading from the N-terminus, the 201-residue chain is Protease (201 aa).

Active-site residues include His55, Asp72, and Cys122.

Belongs to the peptidase C5 family. As to quaternary structure, interacts with protease cofactor pVI-C; this interaction is necessary for protease activation.

It is found in the virion. The protein resides in the host nucleus. It catalyses the reaction Cleaves proteins of the adenovirus and its host cell at two consensus sites: -Yaa-Xaa-Gly-Gly-|-Xaa- and -Yaa-Xaa-Gly-Xaa-|-Gly- (in which Yaa is Met, Ile or Leu, and Xaa is any amino acid).. With respect to regulation, requires DNA and protease cofactor for maximal activation. Inside nascent virions, becomes partially activated by binding to the viral DNA, allowing it to cleave the cofactor that binds to the protease and fully activates it. Actin, like the viral protease cofactor, seems to act as a cofactor in the cleavage of cytokeratin 18 and of actin itself. Cleaves viral precursor proteins (pTP, pIIIa, pVI, pVII, pVIII, and pX) inside newly assembled particles giving rise to mature virions. Protease complexed to its cofactor slides along the viral DNA to specifically locate and cleave the viral precursors. Mature virions have a weakened organization compared to the unmature virions, thereby facilitating subsequent uncoating. Without maturation, the particle lacks infectivity and is unable to uncoat. Late in adenovirus infection, in the cytoplasm, may participate in the cytoskeleton destruction. Cleaves host cell cytoskeletal keratins K7 and K18. The protein is Protease of Pantherophis guttatus (Corn snake).